A 128-amino-acid polypeptide reads, in one-letter code: Probable 4-amino-4-deoxy-L-arabinose-phosphoundecaprenol flippase subunit ArnF (128 aa).

Residues 1-21 (MGLMWGLFSVIIASAAQLSLG) traverse the membrane as a helical segment. The Periplasmic portion of the chain corresponds to 22-35 (YAASHLPPMTQFWD). A helical transmembrane segment spans residues 36-56 (FIAAFFAFGPGARMLVVGLVG). At 57–76 (YLLSVFCWYKALHQLALSKA) the chain is on the cytoplasmic side. The helical transmembrane segment at 77–97 (YALLSMSYVLVWIASMVLPGW) threads the bilayer. Over 98-100 (EGT) the chain is Periplasmic. Residues 101–121 (FSLKALLGVACIMSGLMLIFL) form a helical membrane-spanning segment. At 122-128 (PTTKQRY) the chain is on the cytoplasmic side.

This sequence belongs to the ArnF family. Heterodimer of ArnE and ArnF.

It localises to the cell inner membrane. It functions in the pathway bacterial outer membrane biogenesis; lipopolysaccharide biosynthesis. In terms of biological role, translocates 4-amino-4-deoxy-L-arabinose-phosphoundecaprenol (alpha-L-Ara4N-phosphoundecaprenol) from the cytoplasmic to the periplasmic side of the inner membrane. This is Probable 4-amino-4-deoxy-L-arabinose-phosphoundecaprenol flippase subunit ArnF from Escherichia fergusonii (strain ATCC 35469 / DSM 13698 / CCUG 18766 / IAM 14443 / JCM 21226 / LMG 7866 / NBRC 102419 / NCTC 12128 / CDC 0568-73).